A 376-amino-acid polypeptide reads, in one-letter code: MKDVPAFLQQSQSSGPGQAAVWHRLEELYTKKLWHQLTLQVLDFVQDPCFAQGDGLIKLYENFISEFEHRVNPLSLVEIILHVVRQMTDPNVALTFLEKTREKVKSSDEAVILCKTAIGALKLNIGDLQATKETIEDVEEMLNNLPGVTSVHSRFYDLSSKYYQTIGNHASYYKDALRFLGCVDIKDLPVSEQQERAFTLGLAGLLGEGVFNFGELLMHPVLESLRNTDRQWLIDTLYAFNSGDVDRFQTLKSAWGQQPDLAANEAQLLRKIQLLCLMEMTFTRPANHRQLTFEEIAKSAKITVNKVELLVMKALSVGLVRGSIDEVDKRVHMTWVQPRVLDLQQIKGMKDRLELWCTDVKSMELLVEHQAQDILT.

The region spanning 171–338 (SYYKDALRFL…KRVHMTWVQP (168 aa)) is the PCI domain. K298 carries the post-translational modification N6-acetyllysine.

Belongs to the proteasome subunit S11 family. Component of the 19S proteasome regulatory particle complex. The 26S proteasome consists of a 20S core particle (CP) and two 19S regulatory subunits (RP). The regulatory particle is made of a lid composed of 9 subunits including PSMD13, a base containing 6 ATPases and few additional components.

In terms of biological role, component of the 26S proteasome, a multiprotein complex involved in the ATP-dependent degradation of ubiquitinated proteins. This complex plays a key role in the maintenance of protein homeostasis by removing misfolded or damaged proteins, which could impair cellular functions, and by removing proteins whose functions are no longer required. Therefore, the proteasome participates in numerous cellular processes, including cell cycle progression, apoptosis, or DNA damage repair. This Rattus norvegicus (Rat) protein is 26S proteasome non-ATPase regulatory subunit 13.